The chain runs to 213 residues: Transmembrane emp24 domain-containing protein p24delta8 (213 aa).

The N-terminal stretch at 1-22 (MDLCRSSILLLIIALLSPRTLS) is a signal peptide. The Lumenal segment spans residues 23–180 (MRYELKSSKT…QELNRSTNSK (158 aa)). In terms of domain architecture, GOLD spans 32–148 (TKCIGEEIHE…VDMMEYQVKT (117 aa)). Asn-97 carries an N-linked (GlcNAc...) asparagine glycan. Residues 163–176 (LREREEEMQELNRS) adopt a coiled-coil conformation. Residue Arg-166 is modified to Omega-N-methylated arginine. The N-linked (GlcNAc...) asparagine glycan is linked to Asn-174. The helical transmembrane segment at 181–203 (MAWLSFGSLVVCLSVAGLQFWHL) threads the bilayer. The tract at residues 202–213 (HLKTFFEKKKLI) is interaction with ARF1. Residues 204-213 (KTFFEKKKLI) lie on the Cytoplasmic side of the membrane. Residues 206 to 207 (FF) carry the COPII vesicle coat-binding motif. Residues 206 to 213 (FFEKKKLI) carry the COPI vesicle coat-binding motif.

The protein belongs to the EMP24/GP25L family. In terms of assembly, probably oligomerizes with other members of the EMP24/GP25L family. Associates with the COPI vesicle coat (coatomer). Associates with the COPII vesicle coat (coatomer). Interacts with ARF1 (GDP-bound).

It is found in the endoplasmic reticulum membrane. The protein resides in the golgi apparatus. The protein localises to the cis-Golgi network membrane. It localises to the golgi stack membrane. Its function is as follows. Involved in vesicular protein trafficking. Mainly functions in the early secretory pathway. Thought to act as cargo receptor at the lumenal side for incorporation of secretory cargo molecules into transport vesicles and to be involved in vesicle coat formation at the cytoplasmic side. On Golgi membranes, acts as a primary receptor for ARF1-GDP which is involved in COPI-vesicle formation. The protein is Transmembrane emp24 domain-containing protein p24delta8 of Arabidopsis thaliana (Mouse-ear cress).